A 285-amino-acid polypeptide reads, in one-letter code: 2-dehydro-3-deoxyphosphooctonate aldolase (285 aa).

The protein belongs to the KdsA family.

The protein localises to the cytoplasm. The enzyme catalyses D-arabinose 5-phosphate + phosphoenolpyruvate + H2O = 3-deoxy-alpha-D-manno-2-octulosonate-8-phosphate + phosphate. Its pathway is carbohydrate biosynthesis; 3-deoxy-D-manno-octulosonate biosynthesis; 3-deoxy-D-manno-octulosonate from D-ribulose 5-phosphate: step 2/3. It functions in the pathway bacterial outer membrane biogenesis; lipopolysaccharide biosynthesis. The chain is 2-dehydro-3-deoxyphosphooctonate aldolase from Leptothrix cholodnii (strain ATCC 51168 / LMG 8142 / SP-6) (Leptothrix discophora (strain SP-6)).